Reading from the N-terminus, the 243-residue chain is tRNA (guanine-N(1)-)-methyltransferase (243 aa).

S-adenosyl-L-methionine contacts are provided by residues Gly111 and 131-136 (IGDYVL).

This sequence belongs to the RNA methyltransferase TrmD family. In terms of assembly, homodimer.

It is found in the cytoplasm. It catalyses the reaction guanosine(37) in tRNA + S-adenosyl-L-methionine = N(1)-methylguanosine(37) in tRNA + S-adenosyl-L-homocysteine + H(+). In terms of biological role, specifically methylates guanosine-37 in various tRNAs. This Brevibacillus brevis (strain 47 / JCM 6285 / NBRC 100599) protein is tRNA (guanine-N(1)-)-methyltransferase.